Consider the following 695-residue polypeptide: Phenoloxidase subunit 2 (695 aa).

Cu cation-binding residues include His215, His219, and His245. Glu353 acts as the Proton acceptor in catalysis. Cu cation-binding residues include His368, His372, and His408. 2 disulfide bridges follow: Cys586–Cys630 and Cys588–Cys637.

In terms of assembly, heterodimer. Forms a complex with an interleukin 1-like protein as a consequence of a host defense response. The cofactor is Cu(2+). The N-terminus is blocked. Synthesized by oenocytoids, a type of hemocyte, and released into the hemolymph plasma.

The protein resides in the secreted. The enzyme catalyses 2 L-dopa + O2 = 2 L-dopaquinone + 2 H2O. It catalyses the reaction L-tyrosine + O2 = L-dopaquinone + H2O. With respect to regulation, activated by immulectin and lipopolysaccharide. In terms of biological role, this is a copper-containing oxidase that functions in the formation of pigments such as melanins and other polyphenolic compounds. Catalyzes the rate-limiting conversions of tyrosine to DOPA, DOPA to DOPA-quinone and possibly 5,6 dihydroxyindole to indole-5'6 quinone. Binds to the surface of hemocytes and is involved in hemocyte melanization. This chain is Phenoloxidase subunit 2, found in Manduca sexta (Tobacco hawkmoth).